Reading from the N-terminus, the 485-residue chain is Protein hunchback (485 aa).

The disordered stretch occupies residues T1–K77. A compositionally biased stretch (polar residues) spans Q16–D37. Over residues A59–D72 the composition is skewed to acidic residues. 4 C2H2-type zinc fingers span residues Y87–H109, L116–H138, F144–H166, and Y172–H196. Disordered regions lie at residues K229–S270, N318–H361, and P398–S422. The segment covering N257 to S270 has biased composition (polar residues). Residues N325–E335 are compositionally biased toward acidic residues. The segment covering D345–Q358 has biased composition (polar residues). Positions Q402–T416 are enriched in low complexity. 2 consecutive C2H2-type zinc fingers follow at residues Y432–H454 and F460–H484.

The protein belongs to the hunchback C2H2-type zinc-finger protein family.

The protein localises to the nucleus. In terms of biological role, gap class segmentation protein that controls development of head structures. In Clogmia albipunctata (Mothmidge), this protein is Protein hunchback (hb).